Consider the following 313-residue polypeptide: Probable cell division protein WhiA (313 aa).

A DNA-binding region (H-T-H motif) is located at residues 275–308 (SLRELGELAQPPLSKSCVNHRLRKLEQIAEHILA).

Belongs to the WhiA family.

In terms of biological role, involved in cell division and chromosome segregation. In Desulforudis audaxviator (strain MP104C), this protein is Probable cell division protein WhiA.